Consider the following 376-residue polypeptide: D-alanine--D-alanine ligase (376 aa).

One can recognise an ATP-grasp domain in the interval 150 to 358; sequence KIIFEKEGLP…YSELINKLIE (209 aa). ATP is bound at residue 183 to 238; sequence EGRLTYPCFVKPSNAGSSVGVNKASDRESLVKALNIAAKNDRRILVEEFINGREIE. Mg(2+) contacts are provided by Asp311, Glu325, and Asn327.

The protein belongs to the D-alanine--D-alanine ligase family. Mg(2+) is required as a cofactor. Mn(2+) serves as cofactor.

It localises to the cytoplasm. It catalyses the reaction 2 D-alanine + ATP = D-alanyl-D-alanine + ADP + phosphate + H(+). The protein operates within cell wall biogenesis; peptidoglycan biosynthesis. Cell wall formation. The polypeptide is D-alanine--D-alanine ligase (Ruminiclostridium cellulolyticum (strain ATCC 35319 / DSM 5812 / JCM 6584 / H10) (Clostridium cellulolyticum)).